A 360-amino-acid polypeptide reads, in one-letter code: Peptide chain release factor 1 (360 aa).

Gln-237 carries the N5-methylglutamine modification.

This sequence belongs to the prokaryotic/mitochondrial release factor family. Methylated by PrmC. Methylation increases the termination efficiency of RF1.

Its subcellular location is the cytoplasm. In terms of biological role, peptide chain release factor 1 directs the termination of translation in response to the peptide chain termination codons UAG and UAA. This chain is Peptide chain release factor 1, found in Pseudomonas aeruginosa (strain LESB58).